A 316-amino-acid chain; its full sequence is L-lactate dehydrogenase (316 aa).

NAD(+) is bound by residues V16, D37, K42, Y68, and 82–83 (GA). Q85 and R91 together coordinate substrate. Residues S104, 121–123 (AAN), and S146 contribute to the NAD(+) site. Residue 123 to 126 (NPVD) coordinates substrate. Residue 151-154 (DSAR) participates in substrate binding. Residues R156 and H171 each coordinate beta-D-fructose 1,6-bisphosphate. The active-site Proton acceptor is the H178. Y222 carries the phosphotyrosine modification. T231 lines the substrate pocket.

It belongs to the LDH/MDH superfamily. LDH family. As to quaternary structure, homotetramer.

The protein resides in the cytoplasm. It carries out the reaction (S)-lactate + NAD(+) = pyruvate + NADH + H(+). It functions in the pathway fermentation; pyruvate fermentation to lactate; (S)-lactate from pyruvate: step 1/1. Its activity is regulated as follows. Allosterically activated by fructose 1,6-bisphosphate (FBP). In terms of biological role, catalyzes the conversion of lactate to pyruvate. The polypeptide is L-lactate dehydrogenase (Staphylococcus epidermidis (strain ATCC 12228 / FDA PCI 1200)).